An 80-amino-acid chain; its full sequence is Exodeoxyribonuclease 7 small subunit (80 aa).

It belongs to the XseB family. Heterooligomer composed of large and small subunits.

The protein localises to the cytoplasm. The enzyme catalyses Exonucleolytic cleavage in either 5'- to 3'- or 3'- to 5'-direction to yield nucleoside 5'-phosphates.. Its function is as follows. Bidirectionally degrades single-stranded DNA into large acid-insoluble oligonucleotides, which are then degraded further into small acid-soluble oligonucleotides. In Vibrio cholerae serotype O1 (strain ATCC 39541 / Classical Ogawa 395 / O395), this protein is Exodeoxyribonuclease 7 small subunit.